The primary structure comprises 599 residues: Dehydrogenase eriK (599 aa).

An N-terminal signal peptide occupies residues 1 to 20 (MAFLKARLAALLSVAVSCSA). Residues 43–44 (TA) and 64–65 (EG) contribute to the FAD site. Asn93 carries an N-linked (GlcNAc...) asparagine glycan. 122 to 125 (NGMY) is a binding site for FAD. Residues Asn169, Asn191, Asn234, Asn260, Asn284, Asn319, Asn339, Asn353, Asn365, Asn370, Asn398, Asn456, and Asn518 are each glycosylated (N-linked (GlcNAc...) asparagine). FAD contacts are provided by residues Ala569 and 580–581 (TQ).

It belongs to the GMC oxidoreductase family. In terms of assembly, homodimer. Requires FAD as cofactor.

Its function is as follows. Dehydrogenase; part of the gene cluster that mediates the biosynthesis of erinacines, cyathane-xylosides that show unique biological activities, including leishmanicidal activity, stimulating activity for nerve growth-factor synthesis, and agonistic activity toward the kappa opioid receptor. The role of the dehydrogenase eriK within the pathway has still to be determined. The first step of the erinacines biosynthesis pathway is catalyzed by the geranylgeranyl diphosphate (GGPP) synthase eriE via conversion of farnesyl pyrophosphate and isopentyl pyrophosphate into geranylgeranyl pyrophosphate (GGPP). GGPP is then substrate of the diterpene cyclase eriG for the production of cyatha-3,12-diene. The cytochrome P450 monooxygenase eriI then hydroxylates cyatha-3,12-diene at C-14 of the seven-membered ring to produce erinacol, which is further hydroxylated at C-15 by the cytochrome P450 monooxygenase eriC to yield cyathadiol. The cytochrome P450 monooxygenase eriA then catalyzes C-11 hydroxylation in the presence of the short chain dehydrogenase/reductase (SDR) eriH, which leads to the production of cyathatriol. The acetyltransferase eriL converts cyathatriol into 11-O-acetyl-cyathatriol. The SDR eriH catalyzes further oxidation of 11-O-acetyl-cyathatriol into 1-O-acetylcyathin A3. Finally, the glycosyl transferase eriJ tranfers xylose from UDP-xylose onto C-14 of 11-O-acetyl-cyathatriol to form eracine Q. EriJ is also able to convert 11-O-acetyl-cyathatriol to eracine Q2 by using UDP-D-glucose as cosubstrate, but at a lower rate. This Hericium erinaceus (Lion's mane mushroom) protein is Dehydrogenase eriK.